We begin with the raw amino-acid sequence, 399 residues long: Elongation factor Tu (399 aa).

The tr-type G domain maps to 10-204 (KPHVNIGTIG…AVDANIPEPV (195 aa)). Residues 19-26 (GHVDHGKT) form a G1 region. 19-26 (GHVDHGKT) lines the GTP pocket. Threonine 26 serves as a coordination point for Mg(2+). The interval 60 to 64 (GITIN) is G2. The segment at 81–84 (DCPG) is G3. Residues 81–85 (DCPGH) and 136–139 (NKCD) each bind GTP. The tract at residues 136-139 (NKCD) is G4. Residues 174–176 (SGL) form a G5 region.

It belongs to the TRAFAC class translation factor GTPase superfamily. Classic translation factor GTPase family. EF-Tu/EF-1A subfamily. In terms of assembly, monomer.

Its subcellular location is the cytoplasm. It carries out the reaction GTP + H2O = GDP + phosphate + H(+). GTP hydrolase that promotes the GTP-dependent binding of aminoacyl-tRNA to the A-site of ribosomes during protein biosynthesis. The polypeptide is Elongation factor Tu (Synechococcus sp. (strain RCC307)).